The chain runs to 347 residues: UPF0284 protein YN1551_0030 (347 aa).

It belongs to the UPF0284 family.

The chain is UPF0284 protein YN1551_0030 from Saccharolobus islandicus (strain Y.N.15.51 / Yellowstone #2) (Sulfolobus islandicus).